We begin with the raw amino-acid sequence, 159 residues long: Phosphopantetheine adenylyltransferase (159 aa).

Residue T10 participates in substrate binding. Residues 10-11 (TF) and H18 each bind ATP. Residues K42, L74, and R88 each coordinate substrate. ATP contacts are provided by residues 89 to 91 (GLR), E99, and 124 to 130 (FAYVSSS).

It belongs to the bacterial CoaD family. Homohexamer. Requires Mg(2+) as cofactor.

It localises to the cytoplasm. It catalyses the reaction (R)-4'-phosphopantetheine + ATP + H(+) = 3'-dephospho-CoA + diphosphate. It participates in cofactor biosynthesis; coenzyme A biosynthesis; CoA from (R)-pantothenate: step 4/5. Reversibly transfers an adenylyl group from ATP to 4'-phosphopantetheine, yielding dephospho-CoA (dPCoA) and pyrophosphate. This is Phosphopantetheine adenylyltransferase from Thioalkalivibrio sulfidiphilus (strain HL-EbGR7).